Consider the following 392-residue polypeptide: L-rhamnonate dehydratase (392 aa).

Substrate is bound by residues H22 and R48. Mg(2+) is bound by residues D214, E240, and E268. Catalysis depends on H318, which acts as the Proton acceptor. A substrate-binding site is contributed by E338.

It belongs to the mandelate racemase/muconate lactonizing enzyme family. RhamD subfamily. In terms of assembly, homooctamer; tetramer of dimers. Mg(2+) is required as a cofactor.

It carries out the reaction L-rhamnonate = 2-dehydro-3-deoxy-L-rhamnonate + H2O. Catalyzes the dehydration of L-rhamnonate to 2-keto-3-deoxy-L-rhamnonate (KDR). This is L-rhamnonate dehydratase from Paraburkholderia xenovorans (strain LB400).